A 489-amino-acid chain; its full sequence is Glutamyl-tRNA(Gln) amidotransferase subunit A (489 aa).

Active-site charge relay system residues include lysine 80 and serine 160. Serine 184 serves as the catalytic Acyl-ester intermediate.

The protein belongs to the amidase family. GatA subfamily. As to quaternary structure, heterotrimer of A, B and C subunits.

The catalysed reaction is L-glutamyl-tRNA(Gln) + L-glutamine + ATP + H2O = L-glutaminyl-tRNA(Gln) + L-glutamate + ADP + phosphate + H(+). Functionally, allows the formation of correctly charged Gln-tRNA(Gln) through the transamidation of misacylated Glu-tRNA(Gln) in organisms which lack glutaminyl-tRNA synthetase. The reaction takes place in the presence of glutamine and ATP through an activated gamma-phospho-Glu-tRNA(Gln). This chain is Glutamyl-tRNA(Gln) amidotransferase subunit A, found in Wolbachia pipientis wMel.